The chain runs to 462 residues: Fasciclin-like arabinogalactan protein 18 (462 aa).

Residues Met-1–Ala-25 form the signal peptide. N-linked (GlcNAc...) asparagine glycans are attached at residues Asn-32, Asn-77, and Asn-293. 2 FAS1 domains span residues Asn-40–Leu-185 and Val-271–Leu-414.

Belongs to the fasciclin-like AGP family.

The protein resides in the secreted. Functionally, may be a cell surface adhesion protein. This Arabidopsis thaliana (Mouse-ear cress) protein is Fasciclin-like arabinogalactan protein 18 (FLA18).